The primary structure comprises 262 residues: MVSVKPIPAEVVENREECERTIVLRLRPERPIRWEPGQFLMLGISGVDEKPMAFSGGDDREFELTIEIVGPFTERCADLEPGDVVWVRGPYGKPFEVRGSRAVVVAGGTGVAPLVPLVERLRRARVHVTSVLGGPHADRLPRKDDLEKLSDELYVTTEDGSEGRKGFPTDVLEELVEKECPDVVYACGPEGMLVRVAEIAREHDVPCQVSVVRYVKCGEGICGSCALGKGLLVCRDGPVFWTEELEGTEFGGVRRDVTGKPE.

Residues 4 to 97 (VKPIPAEVVE…RGPYGKPFEV (94 aa)) form the FAD-binding FR-type domain. Residues cysteine 217, cysteine 222, cysteine 225, and cysteine 234 each coordinate [2Fe-2S] cluster.

Belongs to the PyrK family. Heterotetramer of 2 PyrK and 2 PyrD type B subunits. [2Fe-2S] cluster is required as a cofactor. It depends on FAD as a cofactor.

Its pathway is pyrimidine metabolism; UMP biosynthesis via de novo pathway; orotate from (S)-dihydroorotate (NAD(+) route): step 1/1. Its function is as follows. Responsible for channeling the electrons from the oxidation of dihydroorotate from the FMN redox center in the PyrD type B subunit to the ultimate electron acceptor NAD(+). The polypeptide is Probable dihydroorotate dehydrogenase B (NAD(+)), electron transfer subunit (Methanopyrus kandleri (strain AV19 / DSM 6324 / JCM 9639 / NBRC 100938)).